The primary structure comprises 431 residues: Probable amino-acid ABC transporter periplasmic-binding protein y4oP (431 aa).

Positions 1–25 (MKRRTFTAGLAALPFLGSSLTRAFA) are cleaved as a signal peptide.

The protein belongs to the bacterial solute-binding protein 1 family.

It is found in the periplasm. Functionally, probably part of the binding-protein-dependent transport system y4oPQRS. This system probably transports a sugar-like molecule. The sequence is that of Probable amino-acid ABC transporter periplasmic-binding protein y4oP from Sinorhizobium fredii (strain NBRC 101917 / NGR234).